A 475-amino-acid polypeptide reads, in one-letter code: tRNA modification GTPase MnmE (475 aa).

(6S)-5-formyl-5,6,7,8-tetrahydrofolate-binding residues include Arg24, Glu81, and Lys124. In terms of domain architecture, TrmE-type G spans Gly220–Gly397. Asn230 contacts K(+). Residues Asn230–Ser235, Thr249–Thr255, Asp274–Gly277, and Ser378–Arg380 contribute to the GTP site. Ser234 contributes to the Mg(2+) binding site. K(+) contacts are provided by Thr249, Ile251, and Thr254. Residue Thr255 coordinates Mg(2+). Lys475 contacts (6S)-5-formyl-5,6,7,8-tetrahydrofolate.

It belongs to the TRAFAC class TrmE-Era-EngA-EngB-Septin-like GTPase superfamily. TrmE GTPase family. In terms of assembly, homodimer. Heterotetramer of two MnmE and two MnmG subunits. The cofactor is K(+).

Its subcellular location is the cytoplasm. Exhibits a very high intrinsic GTPase hydrolysis rate. Involved in the addition of a carboxymethylaminomethyl (cmnm) group at the wobble position (U34) of certain tRNAs, forming tRNA-cmnm(5)s(2)U34. The polypeptide is tRNA modification GTPase MnmE (Cupriavidus metallidurans (strain ATCC 43123 / DSM 2839 / NBRC 102507 / CH34) (Ralstonia metallidurans)).